The primary structure comprises 122 residues: Large ribosomal subunit protein uL14c (122 aa).

This sequence belongs to the universal ribosomal protein uL14 family. In terms of assembly, part of the 50S ribosomal subunit.

The protein resides in the plastid. Its subcellular location is the chloroplast. Its function is as follows. Binds to 23S rRNA. This chain is Large ribosomal subunit protein uL14c, found in Cryptomeria japonica (Japanese cedar).